Consider the following 520-residue polypeptide: TnpB-like protein L79 (520 aa).

Positions 21–47 (GSKTKKKVFVKKKPPDKKPLKKPVKKT) are enriched in basic residues. The segment at 21-52 (GSKTKKKVFVKKKPPDKKPLKKPVKKTVKTDK) is disordered. Zn(2+) contacts are provided by Cys474, Cys477, Cys491, and Cys494.

It in the central section; belongs to the transposase 2 family. In the C-terminal section; belongs to the transposase 35 family.

The chain is TnpB-like protein L79 from Acanthamoeba polyphaga mimivirus (APMV).